The primary structure comprises 146 residues: Hemoglobin subunit beta (146 aa).

Position 1 is an N-acetylvaline (Val-1). The 145-residue stretch at 2–146 (NLTAAEKTQV…VANALAHKYH (145 aa)) folds into the Globin domain. Thr-12 is modified (phosphothreonine). An N6-acetyllysine modification is found at Lys-59. Residue His-63 participates in heme b binding. An N6-acetyllysine modification is found at Lys-82. His-92 is a heme b binding site. The residue at position 93 (Cys-93) is an S-nitrosocysteine. Lys-144 carries the post-translational modification N6-acetyllysine.

The protein belongs to the globin family. Heterotetramer of two alpha chains and two beta chains. As to expression, red blood cells.

Its function is as follows. Involved in oxygen transport from the lung to the various peripheral tissues. This chain is Hemoglobin subunit beta (HBB), found in Loxodonta africana (African elephant).